The chain runs to 495 residues: Histidine--tRNA ligase (495 aa).

This sequence belongs to the class-II aminoacyl-tRNA synthetase family. In terms of assembly, homodimer.

It is found in the cytoplasm. The enzyme catalyses tRNA(His) + L-histidine + ATP = L-histidyl-tRNA(His) + AMP + diphosphate + H(+). The polypeptide is Histidine--tRNA ligase (Ruegeria pomeroyi (strain ATCC 700808 / DSM 15171 / DSS-3) (Silicibacter pomeroyi)).